Here is a 221-residue protein sequence, read N- to C-terminus: 21 kDa seed protein (221 aa).

An N-terminal signal peptide occupies residues 1–26; the sequence is MKTATAVVLLLFAFTSKSYFFGVANA. An intrachain disulfide couples Cys-69 to Cys-116.

This sequence belongs to the protease inhibitor I3 (leguminous Kunitz-type inhibitor) family.

This is 21 kDa seed protein (ASP) from Theobroma cacao (Cacao).